The sequence spans 145 residues: 3-hydroxyacyl-[acyl-carrier-protein] dehydratase FabZ (145 aa).

The active site involves H48.

It belongs to the thioester dehydratase family. FabZ subfamily.

The protein localises to the cytoplasm. The catalysed reaction is a (3R)-hydroxyacyl-[ACP] = a (2E)-enoyl-[ACP] + H2O. In terms of biological role, involved in unsaturated fatty acids biosynthesis. Catalyzes the dehydration of short chain beta-hydroxyacyl-ACPs and long chain saturated and unsaturated beta-hydroxyacyl-ACPs. The protein is 3-hydroxyacyl-[acyl-carrier-protein] dehydratase FabZ of Geobacillus thermodenitrificans (strain NG80-2).